The primary structure comprises 386 residues: Homoserine O-succinyltransferase (386 aa).

In terms of domain architecture, AB hydrolase-1 spans 49–358 (NAILICHALS…DAEQGHDSFL (310 aa)). Ser156 (nucleophile) is an active-site residue. Arg226 serves as a coordination point for substrate. Active-site residues include Asp321 and His354. Position 355 (Asp355) interacts with substrate.

The protein belongs to the AB hydrolase superfamily. MetX family. In terms of assembly, homodimer.

It is found in the cytoplasm. It carries out the reaction L-homoserine + succinyl-CoA = O-succinyl-L-homoserine + CoA. It functions in the pathway amino-acid biosynthesis; L-methionine biosynthesis via de novo pathway; O-succinyl-L-homoserine from L-homoserine: step 1/1. Functionally, transfers a succinyl group from succinyl-CoA to L-homoserine, forming succinyl-L-homoserine. The sequence is that of Homoserine O-succinyltransferase from Acinetobacter baumannii (strain AB307-0294).